A 480-amino-acid chain; its full sequence is Probable efflux pump outer membrane protein SepC (480 aa).

The signal sequence occupies residues 1–16; that stretch reads MKTHYLSIALSVALSG. The N-palmitoyl cysteine moiety is linked to residue cysteine 17. Cysteine 17 carries S-diacylglycerol cysteine lipidation.

The protein belongs to the outer membrane factor (OMF) (TC 1.B.17) family.

The protein localises to the cell outer membrane. Its function is as follows. Probable outer membrane component of the SepABC efflux pump with unknown specificity. The chain is Probable efflux pump outer membrane protein SepC (sepC) from Pseudomonas putida (strain ATCC 700007 / DSM 6899 / JCM 31910 / BCRC 17059 / LMG 24140 / F1).